The following is a 679-amino-acid chain: UvrABC system protein B (679 aa).

One can recognise a Helicase ATP-binding domain in the interval 31-414; the sequence is ENLTDGLAHQ…ELEKSGTEII (384 aa). 44 to 51 provides a ligand contact to ATP; it reads GVTGSGKT. The Beta-hairpin motif lies at 97–120; it reads YYDYYQPEAYVPSSDTFIEKDASI. The 154-residue stretch at 436 to 589 folds into the Helicase C-terminal domain; sequence QVDDLLSEAR…QIKYNEEHGI (154 aa). Residues 639–674 enclose the UVR domain; it reads QQQIKKLEQQMYKFAQDLEFEKAAAIRDQLHQLREQ.

Belongs to the UvrB family. Forms a heterotetramer with UvrA during the search for lesions. Interacts with UvrC in an incision complex.

Its subcellular location is the cytoplasm. The UvrABC repair system catalyzes the recognition and processing of DNA lesions. A damage recognition complex composed of 2 UvrA and 2 UvrB subunits scans DNA for abnormalities. Upon binding of the UvrA(2)B(2) complex to a putative damaged site, the DNA wraps around one UvrB monomer. DNA wrap is dependent on ATP binding by UvrB and probably causes local melting of the DNA helix, facilitating insertion of UvrB beta-hairpin between the DNA strands. Then UvrB probes one DNA strand for the presence of a lesion. If a lesion is found the UvrA subunits dissociate and the UvrB-DNA preincision complex is formed. This complex is subsequently bound by UvrC and the second UvrB is released. If no lesion is found, the DNA wraps around the other UvrB subunit that will check the other stand for damage. The sequence is that of UvrABC system protein B from Haemophilus influenzae (strain 86-028NP).